A 556-amino-acid polypeptide reads, in one-letter code: Formate--tetrahydrofolate ligase (556 aa).

65 to 72 contributes to the ATP binding site; sequence TPAGEGKS.

The protein belongs to the formate--tetrahydrofolate ligase family.

It carries out the reaction (6S)-5,6,7,8-tetrahydrofolate + formate + ATP = (6R)-10-formyltetrahydrofolate + ADP + phosphate. It functions in the pathway one-carbon metabolism; tetrahydrofolate interconversion. The chain is Formate--tetrahydrofolate ligase from Streptococcus equi subsp. equi (strain 4047).